Reading from the N-terminus, the 108-residue chain is Insulin-like peptide 17 (108 aa).

The first 19 residues, 1 to 19 (MFSTRGVLLLLSLMAAVAA), serve as a signal peptide directing secretion.

This sequence belongs to the insulin family. In terms of tissue distribution, expressed in head neurons and the uterus.

It is found in the secreted. Involved in the regulation of the larval diapause. The sequence is that of Insulin-like peptide 17 from Caenorhabditis elegans.